The chain runs to 205 residues: CASP-like protein 2A1 (205 aa).

The Cytoplasmic segment spans residues 1–35 (MMGDKGEKECATASSPIELGCGEGDESGNKSSMRT). The chain crosses the membrane as a helical span at residues 36 to 56 (VETLLRLVPVALCTVSLVVML). Over 57-77 (KNSQTNDFGSLSYSDLGAFRY) the chain is Extracellular. Residues 78–98 (LVHANGICAGYSLLSAIFTAM) form a helical membrane-spanning segment. Topologically, residues 99–106 (PRPPTMSR) are cytoplasmic. The chain crosses the membrane as a helical span at residues 107–127 (AWTFFLLDQVLTYLILAAGAV). Topologically, residues 128–157 (STEVVYLAYKGDEAVTWSDACSSFGGFCQK) are extracellular. Residues 158-178 (TTASISITFVTVLCYAVLSLI) traverse the membrane as a helical segment. Residues 179–205 (SSYKLFSKYDAPICFNGKGIEIAAFHS) lie on the Cytoplasmic side of the membrane.

It belongs to the Casparian strip membrane proteins (CASP) family. Homodimer and heterodimers.

It localises to the cell membrane. This Vitis vinifera (Grape) protein is CASP-like protein 2A1.